The sequence spans 217 residues: Probable transaldolase (217 aa).

Lysine 83 (schiff-base intermediate with substrate) is an active-site residue.

It belongs to the transaldolase family. Type 3B subfamily.

It is found in the cytoplasm. It carries out the reaction D-sedoheptulose 7-phosphate + D-glyceraldehyde 3-phosphate = D-erythrose 4-phosphate + beta-D-fructose 6-phosphate. The protein operates within carbohydrate degradation; pentose phosphate pathway; D-glyceraldehyde 3-phosphate and beta-D-fructose 6-phosphate from D-ribose 5-phosphate and D-xylulose 5-phosphate (non-oxidative stage): step 2/3. Functionally, transaldolase is important for the balance of metabolites in the pentose-phosphate pathway. The polypeptide is Probable transaldolase (Bartonella tribocorum (strain CIP 105476 / IBS 506)).